Here is a 116-residue protein sequence, read N- to C-terminus: Large ribosomal subunit protein bL19 (116 aa).

Belongs to the bacterial ribosomal protein bL19 family.

Its function is as follows. This protein is located at the 30S-50S ribosomal subunit interface and may play a role in the structure and function of the aminoacyl-tRNA binding site. This chain is Large ribosomal subunit protein bL19, found in Chloroflexus aurantiacus (strain ATCC 29366 / DSM 635 / J-10-fl).